The primary structure comprises 398 residues: uncharacterized protein (398 aa).

The N-terminal stretch at 1-21 (MRKVGITLSVVALVIMGFVAG) is a signal peptide. Cys22 is modified (N-acetylcysteine). Residue Cys22 is the site of S-archaeol cysteine attachment.

The protein belongs to the BMP lipoprotein family.

The protein resides in the cell membrane. This is an uncharacterized protein from Pyrococcus furiosus (strain ATCC 43587 / DSM 3638 / JCM 8422 / Vc1).